Consider the following 329-residue polypeptide: Flotillin-like protein FloA (329 aa).

Residues 4–24 form a helical membrane-spanning segment; it reads IWGFLILILVLIFLGVFFSFV.

The protein belongs to the flotillin-like FloA family. Homooligomerizes.

Its subcellular location is the cell membrane. The protein resides in the membrane raft. Its function is as follows. Found in functional membrane microdomains (FMM) that may be equivalent to eukaryotic membrane rafts. FMMs are highly dynamic and increase in number as cells age. Flotillins are thought to be important factors in membrane fluidity. The sequence is that of Flotillin-like protein FloA from Dictyoglomus turgidum (strain DSM 6724 / Z-1310).